A 224-amino-acid chain; its full sequence is Deoxyribose-phosphate aldolase (224 aa).

D93 functions as the Proton donor/acceptor in the catalytic mechanism. The active-site Schiff-base intermediate with acetaldehyde is the K159. The Proton donor/acceptor role is filled by K189.

The protein belongs to the DeoC/FbaB aldolase family. DeoC type 1 subfamily.

It is found in the cytoplasm. The catalysed reaction is 2-deoxy-D-ribose 5-phosphate = D-glyceraldehyde 3-phosphate + acetaldehyde. The protein operates within carbohydrate degradation; 2-deoxy-D-ribose 1-phosphate degradation; D-glyceraldehyde 3-phosphate and acetaldehyde from 2-deoxy-alpha-D-ribose 1-phosphate: step 2/2. In terms of biological role, catalyzes a reversible aldol reaction between acetaldehyde and D-glyceraldehyde 3-phosphate to generate 2-deoxy-D-ribose 5-phosphate. The sequence is that of Deoxyribose-phosphate aldolase from Mycobacterium bovis (strain ATCC BAA-935 / AF2122/97).